We begin with the raw amino-acid sequence, 169 residues long: HTH-type transcriptional regulator PchR (169 aa).

In terms of domain architecture, HTH marR-type spans 10–153; it reads YDIYVRLLHL…VLKFLEQLTS (144 aa). Residues 64-87 constitute a DNA-binding region (H-T-H motif); that stretch reads NAGIARKMNLSKANVTKISTKLIK.

Homodimer.

In terms of biological role, represses the expression of the yvmC-cypX operon, which is involved in pulcherriminic acid biosynthesis. Also negatively regulates yvmA, yvnB and its own expression. Positively regulates yisI expression. Acts by binding specifically to a 14-bp palindromic motif, the YvmB box, which is present in the promoter region of the target genes. The chain is HTH-type transcriptional regulator PchR from Bacillus subtilis (strain 168).